We begin with the raw amino-acid sequence, 474 residues long: ATP synthase subunit beta (474 aa).

151–158 (GGAGVGKT) is a binding site for ATP.

The protein belongs to the ATPase alpha/beta chains family. As to quaternary structure, F-type ATPases have 2 components, CF(1) - the catalytic core - and CF(0) - the membrane proton channel. CF(1) has five subunits: alpha(3), beta(3), gamma(1), delta(1), epsilon(1). CF(0) has four main subunits: a(1), b(1), b'(1) and c(9-12).

The protein localises to the cell inner membrane. The enzyme catalyses ATP + H2O + 4 H(+)(in) = ADP + phosphate + 5 H(+)(out). Its function is as follows. Produces ATP from ADP in the presence of a proton gradient across the membrane. The catalytic sites are hosted primarily by the beta subunits. This Roseobacter denitrificans (strain ATCC 33942 / OCh 114) (Erythrobacter sp. (strain OCh 114)) protein is ATP synthase subunit beta.